Reading from the N-terminus, the 219-residue chain is Transcription factor MYB23 (219 aa).

HTH myb-type domains lie at 9-61 (EHEY…MNYL) and 62-116 (SPNV…SKKL). DNA-binding regions (H-T-H motif) lie at residues 37–61 (WNRI…MNYL) and 89–112 (WSLI…NTHL).

In terms of assembly, interacts with BHLH2/EGL3/MYC146, BHLH12/MYC1 and GL3. As to expression, expressed in roots, seed coats, leaves, stems and flowers. Detected specifically in trichomes, and in the cell division and differentiation zone of the root.

The protein resides in the nucleus. Its function is as follows. Transcription activator, when associated with BHLH2/EGL3/MYC146 or BHLH12/MYC1. Regulates the epidermal cell fate specification. Mediates the formation of columellae and accumulation of mucilages on seed coats. Controls the elongation of epidermal cells positively in roots but negatively in stems, leading to the promotion of primary roots elongation and repression of leaves and stems elongation, respectively. Ovoids ectopic root-hair formation, probably by inducing GL2 in roots. Controls trichome initiation and branching. The chain is Transcription factor MYB23 (MYB23) from Arabidopsis thaliana (Mouse-ear cress).